Here is a 298-residue protein sequence, read N- to C-terminus: MAYQHCPFDTLLILDFETTSDAANQDYPCEVIQFAIVAYDVPNDKIREDISFNKYVKPVLNRTLTKNCVDFTGIPQRSIDTADTFDVVYEQFQQWLITLGLEEGKFAFVCDSRQDLWRIAQYQMKLSNIQMPAFFRQYINLYKIFTNEMDRMGPKELSATTNIGKMNEYYDLPTIGRAHDAMDDCLNIATILQRMINMGAKVTVNELLTCCASWRRQPLVYNKEWRSSFMDAGKIFERVLPLVVTTIRAGDFRLEMYGVCRYCRKGMDVCGTSHQQTPHDLYKNEEDPIHFAKIAGYY.

Residues 12 to 192 (LILDFETTSD…DDCLNIATIL (181 aa)) form the Exonuclease domain. Mg(2+) is bound by residues Asp-15, Glu-17, and Asp-184. Zn(2+)-binding residues include Cys-210, Cys-260, Cys-263, and Cys-270.

Homodimer (via C-terminus). Interacts with crn-5; interaction promotes the DNase activity of crn-4. Interacts with cps-6, crn-1 and cyn-13. The cofactor is Mg(2+).

Exonuclease activity is inhibited in vitro by pontacyl violet 6R (PV6R), p-chloromercuriphenyl sulfonate (PCMPS), 5,5'-dithiobis(2-nitrobenzoic acid) (DTNB), aurintricarboxylic acid (ATA), 2-morpholin-4-ylethanesulfonate (MES), 4-[(4,6-dichloro-1,3,5-triazin-2-yl)amino]-2-(3-hydroxy-6-oxoxanthen-9-yl)benzoic acid (DR396) and fmoc-d-Cha-OH (FDCO). Interaction with ssRNA is reduced in vitro by PV6R. Possesses 3'-&gt;5' exoribonuclease activity in digestion of DNA and RNA. Cleaves nucleic acid substrates with efficiencies in the following order: single-stranded RNA (ssRNA) &gt; double-stranded DNA (dsDNA) &gt; single-stranded DNA (ssDNA). Involved in apoptotic DNA degradation. The chain is 3'-5' exonuclease crn-4 (crn-4) from Caenorhabditis elegans.